The sequence spans 837 residues: Semaphorin-4B (837 aa).

The N-terminal stretch at 1–43 (MLRTAMGLRSWLAAPWGALPPRPPLLLLLLLLLLLQPPPPTWA) is a signal peptide. The Extracellular portion of the chain corresponds to 44–717 (LSPRISLPLG…WGADRSYWKE (674 aa)). The 477-residue stretch at 47 to 523 (RISLPLGSEE…SHSGVVQVPM (477 aa)) folds into the Sema domain. N69 and N96 each carry an N-linked (GlcNAc...) asparagine glycan. Cystine bridges form between C120/C131 and C149/C158. N165 carries N-linked (GlcNAc...) asparagine glycosylation. 2 disulfides stabilise this stretch: C286–C399 and C310–C359. 2 N-linked (GlcNAc...) asparagine glycosylation sites follow: N410 and N525. The 55-residue stretch at 525–579 (NCSLYRSCGDCLLARDPYCAWSGSSCKHVSLYQPQLATRPWIQDIEGASAKDLCS) folds into the PSI domain. 2 cysteine pairs are disulfide-bonded: C526/C543 and C611/C656. Residues 604–663 (NTVNTLACPLLSNLATRLWLRNGAPVNASASCHVLPTGDLLLVGTQQLGEFQCWSLEEGF) form the Ig-like C2-type domain. A glycan (N-linked (GlcNAc...) asparagine) is linked at N630. A helical membrane pass occupies residues 718–738 (FLVMCTLFVLAVLLPVLFLLY). Residues 739–837 (RHRNSMKVFL…LGSEIRDSVV (99 aa)) lie on the Cytoplasmic side of the membrane. Residues 767–805 (PETRPLNGLGPPSTPLDHRGYQSLSDSPPGSRVFTESEK) form a disordered region. S793, S818, and S830 each carry phosphoserine.

This sequence belongs to the semaphorin family.

The protein localises to the membrane. Its function is as follows. Inhibits axonal extension by providing local signals to specify territories inaccessible for growing axons. The chain is Semaphorin-4B from Homo sapiens (Human).